A 426-amino-acid chain; its full sequence is Enolase (426 aa).

Gln-163 is a binding site for (2R)-2-phosphoglycerate. Catalysis depends on Glu-205, which acts as the Proton donor. 3 residues coordinate Mg(2+): Asp-242, Glu-283, and Asp-310. The (2R)-2-phosphoglycerate site is built by Lys-335, Arg-364, Ser-365, and Lys-386. Lys-335 functions as the Proton acceptor in the catalytic mechanism.

Belongs to the enolase family. Requires Mg(2+) as cofactor.

The protein localises to the cytoplasm. The protein resides in the secreted. Its subcellular location is the cell surface. It catalyses the reaction (2R)-2-phosphoglycerate = phosphoenolpyruvate + H2O. Its pathway is carbohydrate degradation; glycolysis; pyruvate from D-glyceraldehyde 3-phosphate: step 4/5. In terms of biological role, catalyzes the reversible conversion of 2-phosphoglycerate (2-PG) into phosphoenolpyruvate (PEP). It is essential for the degradation of carbohydrates via glycolysis. This chain is Enolase, found in Clavibacter sepedonicus (Clavibacter michiganensis subsp. sepedonicus).